Consider the following 239-residue polypeptide: Uridylate kinase (239 aa).

13–16 (KLSG) provides a ligand contact to ATP. Residue Gly-55 coordinates UMP. Positions 56 and 60 each coordinate ATP. UMP contacts are provided by residues Asp-75 and 136 to 143 (TGNPFFTT). ATP is bound by residues Thr-163, Asn-164, Tyr-169, and Asp-172.

This sequence belongs to the UMP kinase family. As to quaternary structure, homohexamer.

The protein localises to the cytoplasm. It catalyses the reaction UMP + ATP = UDP + ADP. The protein operates within pyrimidine metabolism; CTP biosynthesis via de novo pathway; UDP from UMP (UMPK route): step 1/1. Inhibited by UTP. Catalyzes the reversible phosphorylation of UMP to UDP. In Neisseria gonorrhoeae (strain ATCC 700825 / FA 1090), this protein is Uridylate kinase.